Reading from the N-terminus, the 460-residue chain is Benzyl alcohol O-benzoyltransferase (460 aa).

Catalysis depends on proton acceptor residues histidine 167 and aspartate 382.

This sequence belongs to the plant acyltransferase family. In terms of tissue distribution, specifically expressed in flowers, mainly in the limb of flowers corollas, and, at low levels, in roots, stems, sepals and leaves.

The enzyme catalyses benzyl alcohol + benzoyl-CoA = benzyl benzoate + CoA. The catalysed reaction is benzyl alcohol + acetyl-CoA = benzyl acetate + CoA. It carries out the reaction 3-hydroxybenzyl alcohol + acetyl-CoA = 3-hydroxy-benzyl acetate + CoA. It catalyses the reaction 3-hydroxybenzyl alcohol + benzoyl-CoA = 3-hydroxy-benzyl benzoate + CoA. The enzyme catalyses 2-phenylethanol + benzoyl-CoA = phenethyl benzoate + CoA. The catalysed reaction is (3Z)-hex-3-en-1-ol + benzoyl-CoA = (3Z)-hex-3-en-1-yl benzoate + CoA. It carries out the reaction (2E)-geraniol + acetyl-CoA = (2E)-geranyl acetate + CoA. It catalyses the reaction butan-1-ol + benzoyl-CoA = butyl benzoate + CoA. The enzyme catalyses (2E)-geraniol + benzoyl-CoA = (2E)-geranyl benzoate + CoA. The catalysed reaction is octan-1-ol + benzoyl-CoA = octyl benzoate + CoA. The protein operates within aromatic compound metabolism; benzoyl-CoA degradation. In terms of biological role, involved in the production of volatile organic compounds (VOCs), including floral volatile benzenoids and phenylpropanoids (FVBP), in flowers of fragrant cultivars (e.g. cv. Mitchell and cv. V26), scent attracting pollinators (e.g. the night-active hawkmoth pollinator Manduca sexta). Acyltransferase that catalyzes the transfer of benzoyl and acetyl moieties to a large variety of potential substrate alcohols, and involved in the formation of volatile esters benzyl benzoate and phenylethyl benzoate from benzoyl-CoA. With acetyl-CoA, mainly active on benzyl alcohol, and, to a lower extent, on 3-hydroxybenzyl alcohol, geraniol, and 2-phenylethanol, but barely active on butanol, 1-octanol, 4-hydroxy-benzyl alcohol, 2-hexanol, cis-3-hexen-1-ol and linalool. With benzoyl-CoA, mainly active on benzyl alcohol, but also efficient on several substrates, including 3-hydroxybenzyl alcohol, 2-phenylethanol, geraniol, butanol, cis-3-hexen-1-ol and 1-octanol. The protein is Benzyl alcohol O-benzoyltransferase of Petunia hybrida (Petunia).